The following is a 477-amino-acid chain: Glycogen synthase (477 aa).

Residue lysine 15 coordinates ADP-alpha-D-glucose.

The protein belongs to the glycosyltransferase 1 family. Bacterial/plant glycogen synthase subfamily.

It carries out the reaction [(1-&gt;4)-alpha-D-glucosyl](n) + ADP-alpha-D-glucose = [(1-&gt;4)-alpha-D-glucosyl](n+1) + ADP + H(+). The protein operates within glycan biosynthesis; glycogen biosynthesis. Synthesizes alpha-1,4-glucan chains using ADP-glucose. The chain is Glycogen synthase from Streptococcus pneumoniae (strain 70585).